The primary structure comprises 91 residues: Signal recognition particle 19 kDa protein (91 aa).

The protein belongs to the SRP19 family. In terms of assembly, part of the signal recognition particle protein translocation system, which is composed of SRP and FtsY. Archaeal SRP consists of a 7S RNA molecule of 300 nucleotides and two protein subunits: SRP54 and SRP19.

It localises to the cytoplasm. Its function is as follows. Involved in targeting and insertion of nascent membrane proteins into the cytoplasmic membrane. Binds directly to 7S RNA and mediates binding of the 54 kDa subunit of the SRP. The protein is Signal recognition particle 19 kDa protein of Methanoregula boonei (strain DSM 21154 / JCM 14090 / 6A8).